A 120-amino-acid polypeptide reads, in one-letter code: Ribonuclease P protein component (120 aa).

The protein belongs to the RnpA family. Consists of a catalytic RNA component (M1 or rnpB) and a protein subunit.

The enzyme catalyses Endonucleolytic cleavage of RNA, removing 5'-extranucleotides from tRNA precursor.. Functionally, RNaseP catalyzes the removal of the 5'-leader sequence from pre-tRNA to produce the mature 5'-terminus. It can also cleave other RNA substrates such as 4.5S RNA. The protein component plays an auxiliary but essential role in vivo by binding to the 5'-leader sequence and broadening the substrate specificity of the ribozyme. This Latilactobacillus sakei subsp. sakei (strain 23K) (Lactobacillus sakei subsp. sakei) protein is Ribonuclease P protein component.